We begin with the raw amino-acid sequence, 163 residues long: uncharacterized protein (163 aa).

The stretch at 136–161 (QKYIENHQKEINEHVEKLRTLHKELR) forms a coiled coil.

This is an uncharacterized protein from Acanthamoeba polyphaga (Amoeba).